Here is a 518-residue protein sequence, read N- to C-terminus: GTPase MTG2, mitochondrial (518 aa).

Residues 1 to 23 (MSIAWSSVFKRELRLERFLPRVY) constitute a mitochondrion transit peptide. Residues 89-339 (GNFVDVRIVK…QHFLFELKSI (251 aa)) form the Obg domain. The OBG-type G domain occupies 340–512 (ADLGLIGLPN…LKKKMFKCAR (173 aa)). Residues 346 to 353 (GLPNAGKS), 394 to 398 (DIPGI), and 460 to 463 (NKVD) contribute to the GTP site.

It belongs to the TRAFAC class OBG-HflX-like GTPase superfamily. OBG GTPase family. In terms of assembly, interacts with the mitochondrial 54S large ribosomal subunit.

It is found in the mitochondrion inner membrane. Its function is as follows. Required for mitochondrial protein synthesis. May be involved in mitochondrial ribosome biogenesis. In Saccharomyces cerevisiae (strain ATCC 204508 / S288c) (Baker's yeast), this protein is GTPase MTG2, mitochondrial (MTG2).